The chain runs to 207 residues: MFKGMLGKKIGMTSIFAADGTLVPVTVVRFGPCVVTQVKAEKTDGYNALQLGFDERALAKCNKPKVGHFSKSGSTGFNVVREFRVENTDEFEVGQNIGLDGFAIGDKVNVSGTSKGRGFAGTIKRHGFSRGPETHGCRNHRKPGSIGCSAWPARVVKGRRMPGHMGVDRKTVKNLEIIDIRPDENLVMIKGPVPGWKTGLLEIRKAV.

Belongs to the universal ribosomal protein uL3 family. Part of the 50S ribosomal subunit. Forms a cluster with proteins L14 and L19.

One of the primary rRNA binding proteins, it binds directly near the 3'-end of the 23S rRNA, where it nucleates assembly of the 50S subunit. The protein is Large ribosomal subunit protein uL3 of Desulforapulum autotrophicum (strain ATCC 43914 / DSM 3382 / VKM B-1955 / HRM2) (Desulfobacterium autotrophicum).